Here is a 422-residue protein sequence, read N- to C-terminus: p-hydroxyphenylacetate 3-hydroxylase, oxygenase component (422 aa).

Tryptophan 112 lines the FMN pocket. Residues histidine 120 and serine 146 each contribute to the substrate site. Residues serine 146–isoleucine 148 and tryptophan 169–serine 171 contribute to the FMN site. Arginine 263–phenylalanine 266 is a substrate binding site. FMN contacts are provided by residues arginine 292, tyrosine 296, alanine 374–threonine 375, and histidine 396–alanine 397. Tyrosine 296 lines the substrate pocket.

It belongs to the HpaH/HsaA monooxygenase family. Homotetramer. The p-hydroxyphenylacetate 3-hydroxylase (HpaH) is composed of an oxygenase component C2 and a reductase component C1.

The catalysed reaction is 4-hydroxyphenylacetate + FMNH2 + O2 = 3,4-dihydroxyphenylacetate + FMN + H2O + H(+). It carries out the reaction 4-hydroxyphenylacetate + FADH2 + O2 = 3,4-dihydroxyphenylacetate + FAD + H2O + H(+). The protein operates within aromatic compound metabolism; 4-hydroxyphenylacetate degradation; pyruvate and succinate semialdehyde from 4-hydroxyphenylacetate: step 1/7. Inhibited by flavin concentrations greater than 15 uM. Also inhibited by excess p-hydroxyphenylacetate (HPA). Functionally, oxygenase component of a two-component system that utilizes reduced FMN (FMNH2) supplied by the reductase component to catalyze the hydroxylation of 4-hydroxyphenylacetic acid, leading to the production of 3,4-dihydroxyphenylacetate (3,4-DHPA). Also utilizes other reduced flavins such as FADH2 and reduced riboflavin to a lesser extent. Only the compounds with a hydroxyl group in the para (p-) position can be hydroxylated. May also oxidize phenol to catechol, and hydroxylate other phenol derivatives. The polypeptide is p-hydroxyphenylacetate 3-hydroxylase, oxygenase component (Acinetobacter baumannii).